We begin with the raw amino-acid sequence, 954 residues long: Leucine--tRNA ligase (954 aa).

A 'HIGH' region motif is present at residues 67–78 (PYPSGAGLHVGH). The 'KMSKS' region signature appears at 729–733 (KMGKS). Lys732 contacts ATP.

It belongs to the class-I aminoacyl-tRNA synthetase family.

It localises to the cytoplasm. The catalysed reaction is tRNA(Leu) + L-leucine + ATP = L-leucyl-tRNA(Leu) + AMP + diphosphate. This is Leucine--tRNA ligase from Salinispora tropica (strain ATCC BAA-916 / DSM 44818 / JCM 13857 / NBRC 105044 / CNB-440).